A 1017-amino-acid chain; its full sequence is Probable calcium-transporting ATPase 8, plasma membrane-type (1017 aa).

At 1 to 153 the chain is on the cytoplasmic side; the sequence is MEKLDRYLQE…FVWDAFQDMT (153 aa). The next 2 membrane-spanning stretches (helical) occupy residues 154–174 and 177–197; these read LIIL…TEGW and GMYD…VTAV. The Cytoplasmic segment spans residues 198 to 228; the sequence is SDYKQSLQFKELDNEKKKIFIHVTRDGRRQK. A run of 2 helical transmembrane segments spans residues 229–249 and 331–351; these read ISIY…DQVP and VATV…LVLL. Residues 352 to 384 are Cytoplasmic-facing; it reads VRFLIDKGMTVGLLKWYSTDALTIVNYFATAVT. The chain crosses the membrane as a helical span at residues 385-405; the sequence is IIVVAVPEGLPLAVTLSLAFA. The active-site 4-aspartylphosphate intermediate is aspartate 434. Mg(2+) is bound by residues aspartate 736 and aspartate 740. A helical transmembrane segment spans residues 803–823; it reads IVALVINFVSACITGSAPLTA. Residues 824 to 825 are Cytoplasmic-facing; it reads VQ. A run of 2 helical transmembrane segments spans residues 826-846 and 875-895; these read LLWV…TEPP and SLYQ…LLNI. The Cytoplasmic segment spans residues 896–938; it reads KGADSKSIINTLIFNSFVFCQVFNEINSREMQKINVFRGIISN. The next 2 membrane-spanning stretches (helical) occupy residues 939 to 959 and 973 to 993; these read WIFI…IEFL and WLLS…LKCI. Topologically, residues 994–1017 are cytoplasmic; sequence PVGSGETSATPNGYRPLANGPDDI.

The protein belongs to the cation transport ATPase (P-type) (TC 3.A.3) family. Type IIB subfamily.

Its subcellular location is the membrane. The catalysed reaction is Ca(2+)(in) + ATP + H2O = Ca(2+)(out) + ADP + phosphate + H(+). With respect to regulation, activated by calmodulin. Its function is as follows. This magnesium-dependent enzyme catalyzes the hydrolysis of ATP coupled with the translocation of calcium from the cytosol out of the cell, into the endoplasmic reticulum, or into organelles. This is Probable calcium-transporting ATPase 8, plasma membrane-type from Oryza sativa subsp. japonica (Rice).